A 753-amino-acid chain; its full sequence is Synaptotagmin-like protein 5 (753 aa).

In terms of domain architecture, RabBD spans 7–123; the sequence is FINLSFLLDH…IISGEWFLEE (117 aa). An FYVE-type zinc finger spans residues 64 to 106; the sequence is CVHCHKTLGLIFDRGDPCQACSLRVCSECRVTGLDGSWKCTVC. Disordered regions lie at residues 145-279, 297-359, and 380-404; these read RRSP…SREH, LTKS…LNSL, and LASG…VPDA. At S147 the chain carries Phosphoserine. Over residues 150 to 174 the composition is skewed to polar residues; that stretch reads SEETQNQEQAQQCVDKSDTLSSVRQ. A compositionally biased stretch (basic and acidic residues) spans 195–206; that stretch reads TRGEIRTPKPES. The span at 214–223 shows a compositional bias: polar residues; it reads LDSQNLQSFK. Positions 224–237 are enriched in low complexity; sequence SASGSDRGSTTSSD. The segment covering 249-275 has biased composition (polar residues); sequence KSSYSNGGIPVTQRSPVPSAHSVTSIN. The span at 380–391 shows a compositional bias: polar residues; it reads LASGLSTNSQAG. 2 C2 domains span residues 429–550 and 597–717; these read VTGE…DEWF and KRGK…VDWM.

Binds RAB27A that has been activated by GTP-binding.

The protein resides in the membrane. May act as Rab effector protein and play a role in vesicle trafficking. Binds phospholipids. The polypeptide is Synaptotagmin-like protein 5 (Sytl5) (Mus musculus (Mouse)).